The chain runs to 597 residues: Elongation factor 4 (597 aa).

The tr-type G domain occupies 2 to 184 (KNIRNFSIIA…TIVAKVPAPE (183 aa)). GTP-binding positions include 14 to 19 (DHGKST) and 131 to 134 (NKID).

Belongs to the TRAFAC class translation factor GTPase superfamily. Classic translation factor GTPase family. LepA subfamily.

The protein localises to the cell inner membrane. The enzyme catalyses GTP + H2O = GDP + phosphate + H(+). Required for accurate and efficient protein synthesis under certain stress conditions. May act as a fidelity factor of the translation reaction, by catalyzing a one-codon backward translocation of tRNAs on improperly translocated ribosomes. Back-translocation proceeds from a post-translocation (POST) complex to a pre-translocation (PRE) complex, thus giving elongation factor G a second chance to translocate the tRNAs correctly. Binds to ribosomes in a GTP-dependent manner. The sequence is that of Elongation factor 4 from Francisella tularensis subsp. mediasiatica (strain FSC147).